The primary structure comprises 115 residues: DNA-binding protein STK_13740 (115 aa).

This sequence belongs to the PDCD5 family.

This is DNA-binding protein STK_13740 from Sulfurisphaera tokodaii (strain DSM 16993 / JCM 10545 / NBRC 100140 / 7) (Sulfolobus tokodaii).